Reading from the N-terminus, the 226-residue chain is UPF0758 protein SPs0978 (226 aa).

Residues Ser-103–Leu-225 form the MPN domain. Positions 174, 176, and 187 each coordinate Zn(2+). The JAMM motif motif lies at His-174–Asp-187.

Belongs to the UPF0758 family.

The sequence is that of UPF0758 protein SPs0978 from Streptococcus pyogenes serotype M3 (strain SSI-1).